Here is a 410-residue protein sequence, read N- to C-terminus: Tegument protein VP16 homolog (410 aa).

The tract at residues 388–410 (PPSPSEILPGDPPRPPTCGFLTR) is disordered.

This sequence belongs to the herpesviridae tegument protein VP16 protein family. Associates with the VP16-induced complex; binding to host HCFC1 activates VP16 for association with the octamer motif-binding host protein POU2F1, to form a multiprotein-DNA complex responsible for activating transcription of the viral immediate early genes.

It localises to the virion tegument. The protein localises to the host nucleus. Transcriptional activator of immediate-early (IE) gene products (alpha genes). Acts as a key activator of lytic infection by initiating the lytic program through the assembly of the transcriptional regulatory VP16-induced complex composed of VP16 and two cellular factors, HCFC1 and POU2F1. VP16-induced complex represents a regulatory switch: when it is on, it promotes IE-gene expression and thus lytic infection, and when it is off, it limits IE-gene transcription favoring latent infection. Functionally, may play a role in the aggregation of tegument proteins around nucleocapsids during virus morphogenesis. The protein is Tegument protein VP16 homolog of Varicella-zoster virus (strain Dumas) (HHV-3).